A 214-amino-acid polypeptide reads, in one-letter code: Protein verrocchio (214 aa).

As to quaternary structure, probably homomultimerizes. Component of the MTV complex, composed of moi/modigliani, tea and ver/verrocchio. Interacts with moi/modigliani and tea (via C-terminus); the interactions are direct and require fully intact moi/modigliani and ver/verrocchio. The MTV complex is recruited to telomeres by the HipHop-HOAP complex, consisting of HipHop, cav/HOAP and Su(var)205/HP1 to form the terminin telomere-capping complex. Interacts with cav/HOAP; the interaction is direct. Interacts with Su(var)205/HP1; the interaction is indirect and probably requires cav/HOAP or moi/modigliani. Probably interacts with peo (via N-terminus and UBC domain).

The protein localises to the nucleus. It is found in the chromosome. The protein resides in the telomere. Its function is as follows. Part of the MTV complex that associates with the HipHop-HOAP complex to form the terminin telomere-capping complex involved in telomere maintenance and prevention of telomere fusion. As part of the MTV complex binds single stranded DNA in a sequence-independent manner, protecting it from degradation. The polypeptide is Protein verrocchio (Drosophila melanogaster (Fruit fly)).